We begin with the raw amino-acid sequence, 300 residues long: Ribosomal protein L11 methyltransferase (300 aa).

S-adenosyl-L-methionine contacts are provided by Thr152, Gly173, Asp195, and Asn234.

This sequence belongs to the methyltransferase superfamily. PrmA family.

It localises to the cytoplasm. It carries out the reaction L-lysyl-[protein] + 3 S-adenosyl-L-methionine = N(6),N(6),N(6)-trimethyl-L-lysyl-[protein] + 3 S-adenosyl-L-homocysteine + 3 H(+). Methylates ribosomal protein L11. In Burkholderia vietnamiensis (strain G4 / LMG 22486) (Burkholderia cepacia (strain R1808)), this protein is Ribosomal protein L11 methyltransferase.